Reading from the N-terminus, the 292-residue chain is Transforming growth factor-beta receptor type 3-like protein (292 aa).

An N-terminal signal peptide occupies residues 1 to 16 (MLGTVLLLALLPGITT). The 154-residue stretch at 17-170 (LPSGPPAPPF…APAPLTPPPP (154 aa)) folds into the ZP; truncated domain. The Extracellular portion of the chain corresponds to 17–244 (LPSGPPAPPF…PAPAALEPAP (228 aa)). Cysteine 85 and cysteine 147 form a disulfide bridge. Positions 160–236 (RAPAPLTPPP…AVRPEPPAPA (77 aa)) are disordered. Composition is skewed to pro residues over residues 164–175 (PLTPPPPPPPSR) and 213–222 (PRPPPRPPKS). A helical transmembrane segment spans residues 245–265 (VVALVLAAFVLGAALAAGLGL). Residues 266–292 (VCAHSAPHAPGPPARASPSGPQPRRSQ) lie on the Cytoplasmic side of the membrane. The interval 273–292 (HAPGPPARASPSGPQPRRSQ) is disordered. Residues 281 to 292 (ASPSGPQPRRSQ) are compositionally biased toward low complexity.

In terms of processing, glycosylated. In terms of tissue distribution, expressed in pituitary gland gonadotrope cells.

Its subcellular location is the cell membrane. Functionally, expressed in gonadotrope cells, acts as an inhibin B coreceptor and regulates follicle-stimulating hormone (FSH) levels and female fertility. The polypeptide is Transforming growth factor-beta receptor type 3-like protein (Homo sapiens (Human)).